A 22-amino-acid polypeptide reads, in one-letter code: Magnificalysin II (22 aa).

The plays an important role in the hemolytic activity stretch occupies residues 3-12 (ALAGTIIDGA). The interval 11 to 22 (GASLGFDILNKV) is N-terminal region.

This sequence belongs to the actinoporin family. Sea anemone subfamily. In terms of assembly, octamer or nonamer in membranes. Monomer in the soluble state.

The protein resides in the secreted. It localises to the nematocyst. It is found in the target cell membrane. Functionally, pore-forming protein that forms cations-selective hydrophilic pores of around 1 nm and causes cytolysis. Pore formation is a multi-step process that involves specific recognition of membrane sphingomyelin (but neither cholesterol nor phosphatidylcholine) using aromatic rich region and adjacent phosphocholine (POC) binding site, firm binding to the membrane (mainly driven by hydrophobic interactions) accompanied by the transfer of the N-terminal region to the lipid-water interface and finally pore formation after oligomerization of monomers. The sequence is that of Magnificalysin II from Heteractis magnifica (Magnificent sea anemone).